The following is a 366-amino-acid chain: 2-aminoethylphosphonate--pyruvate transaminase (366 aa).

Position 192 is an N6-(pyridoxal phosphate)lysine (Lys-192).

This sequence belongs to the class-V pyridoxal-phosphate-dependent aminotransferase family. PhnW subfamily. Homodimer. The cofactor is pyridoxal 5'-phosphate.

The enzyme catalyses (2-aminoethyl)phosphonate + pyruvate = phosphonoacetaldehyde + L-alanine. In terms of biological role, involved in phosphonate degradation. The polypeptide is 2-aminoethylphosphonate--pyruvate transaminase (phnW) (Lysinibacillus sphaericus (strain C3-41)).